We begin with the raw amino-acid sequence, 80 residues long: Cytochrome c-553 (80 aa).

4 residues coordinate heme c: Cys-13, Cys-16, His-17, and Met-58.

Binds 1 heme c group covalently per subunit.

The protein localises to the periplasm. Functionally, natural electron acceptor for a formate dehydrogenase. The chain is Cytochrome c-553 from Desulfomicrobium norvegicum (strain DSM 1741 / NCIMB 8310) (Desulfovibrio baculatus (strain Norway 4)).